We begin with the raw amino-acid sequence, 1024 residues long: E3 ISG15--protein ligase HERC5 (1024 aa).

The span at 1 to 13 shows a compositional bias: basic residues; sequence MERRSRRKSRRNG. A disordered region spans residues 1–28; that stretch reads MERRSRRKSRRNGRSTAGKAAATQPAKS. 5 RCC1 repeats span residues 96 to 155, 156 to 208, 209 to 260, 262 to 312, and 314 to 364; these read NMKI…ALSK, GGEL…ALSM, SGNI…LLTQ, GLLF…AYVS, and LGKV…LIMI. The HECT domain occupies 702 to 1024; that stretch reads ENEDLRKELW…EAINNNRGFG (323 aa). Catalysis depends on Cys994, which acts as the Glycyl thioester intermediate.

In terms of assembly, (Microbial infection) Interacts with human cytomegalovirus protein UL26; this interaction inhibits global protein ISGylation. (Microbial infection) Interacts with Kaposi's sarcoma-associated herpesvirus protein v-IRF1; this interaction inhibits global protein ISGylation. As to quaternary structure, binds to CCNA1, CCNB1, CCND1 and CCNE1. Interacts with UBE2L6. Interacts with IRF3, this interaction is marginal in resting cells but enhanced upon viral infection. Interacts with influenza A virus NS1. In terms of processing, ISGylated. In terms of tissue distribution, expressed in testis and to a lesser degree in brain, ovary and placenta. Found in most tissues at low levels.

It localises to the cytoplasm. The protein resides in the perinuclear region. Functionally, major E3 ligase for ISG15 conjugation. Acts as a positive regulator of innate antiviral response in cells induced by interferon. Functions as part of the ISGylation machinery that recognizes target proteins in a broad and relatively non-specific manner. Catalyzes ISGylation of IRF3 which results in sustained activation, it attenuates IRF3-PIN1 interaction, which antagonizes IRF3 ubiquitination and degradation, and boosts the antiviral response. Mediates ISGylation of the phosphatase PTEN leading to its degradation, thus alleviating its suppression of the PI3K-AKT signaling pathway and promoting the production of cytokines that facilitate bacterial clearance. Interferes with the function of key viral structural proteins such as ebolavirus structural protein VP40 or HIV-1 protein GAG. Catalyzes ISGylation of influenza A viral NS1 which attenuates virulence; ISGylated NS1 fails to form homodimers and thus to interact with its RNA targets. Catalyzes ISGylation of papillomavirus type 16 L1 protein which results in dominant-negative effect on virus infectivity. Physically associated with polyribosomes, broadly modifies newly synthesized proteins in a cotranslational manner. In an interferon-stimulated cell, newly translated viral proteins are primary targets of ISG15. Promotes parkin/PRKN ubiquitin E3 ligase activity by suppressing the intramolecular interaction that maintains its autoinhibited conformation. (Microbial infection) Functions as an E3 ligase for ISGylation of hepatitis B virus protein X leading to enhanced viral replication due to increased interferon resistance. This chain is E3 ISG15--protein ligase HERC5 (HERC5), found in Homo sapiens (Human).